The primary structure comprises 240 residues: Uridylate kinase (240 aa).

ATP is bound at residue 13-16; sequence KASG. Residues 21-26 form an involved in allosteric activation by GTP region; sequence GGQGFG. Glycine 55 is a UMP binding site. The ATP site is built by glycine 56 and arginine 60. UMP contacts are provided by residues aspartate 75 and 136-143; that span reads TGNPFFTT. Threonine 163, glutamine 164, tyrosine 169, and aspartate 172 together coordinate ATP.

Belongs to the UMP kinase family. As to quaternary structure, homohexamer.

It is found in the cytoplasm. The catalysed reaction is UMP + ATP = UDP + ADP. It functions in the pathway pyrimidine metabolism; CTP biosynthesis via de novo pathway; UDP from UMP (UMPK route): step 1/1. With respect to regulation, allosterically activated by GTP. Inhibited by UTP. Functionally, catalyzes the reversible phosphorylation of UMP to UDP. This Rhizobium johnstonii (strain DSM 114642 / LMG 32736 / 3841) (Rhizobium leguminosarum bv. viciae) protein is Uridylate kinase.